The following is a 408-amino-acid chain: MSVTPTANSTEEAANITASPRLWPYTEPASAIIILVVSLIILLTIVGNVLVIVAVLTSRALRAPQNLFLVSLACADILVATLVIPFSLANEIMGYWYFGSTWCAFYLALDVLFCTSSIVHLCAISLDRYWSVTKAVRYNLKRTPRRIKCMIAVVWLISAVISFPPLIMTKHDEKECLINDETWYILSSCAVSFFAPGLIMITVYCKIYRVAKQRSSTVFVAKNGLERQPSQSETCFVRKDKFEKESPSSNSSESAQRQEELDDIDLEESAASDSRARGSRFSKRRRVEGERRGPQRSCRVSWAAHQEPGSRQQQLASKSKVAQMREKRFTFVLAVVMGVFVLCWFPFFFTYSLQAVCGERCGPPEALFKLFFWIGYCNSSVNPIIYTIFNRDFRKAFKKVVCWSAQRT.

The Extracellular portion of the chain corresponds to 1–30 (MSVTPTANSTEEAANITASPRLWPYTEPAS). Residues N8 and N15 are each glycosylated (N-linked (GlcNAc...) asparagine). A helical membrane pass occupies residues 31-55 (AIIILVVSLIILLTIVGNVLVIVAV). Topologically, residues 56 to 67 (LTSRALRAPQNL) are cytoplasmic. A helical transmembrane segment spans residues 68–93 (FLVSLACADILVATLVIPFSLANEIM). Residues 94 to 103 (GYWYFGSTWC) are Extracellular-facing. C103 and C176 form a disulfide bridge. A helical membrane pass occupies residues 104 to 126 (AFYLALDVLFCTSSIVHLCAISL). The Cytoplasmic segment spans residues 127-147 (DRYWSVTKAVRYNLKRTPRRI). The helical transmembrane segment at 148–170 (KCMIAVVWLISAVISFPPLIMTK) threads the bilayer. Over 171–181 (HDEKECLINDE) the chain is Extracellular. The helical transmembrane segment at 182–205 (TWYILSSCAVSFFAPGLIMITVYC) threads the bilayer. The Cytoplasmic segment spans residues 206–332 (KIYRVAKQRS…QMREKRFTFV (127 aa)). A disordered region spans residues 242 to 306 (FEKESPSSNS…SCRVSWAAHQ (65 aa)). A compositionally biased stretch (acidic residues) spans 260–270 (ELDDIDLEESA). Basic residues predominate over residues 277 to 286 (RGSRFSKRRR). Residues 333–356 (LAVVMGVFVLCWFPFFFTYSLQAV) form a helical membrane-spanning segment. Topologically, residues 357–369 (CGERCGPPEALFK) are extracellular. A helical membrane pass occupies residues 370-390 (LFFWIGYCNSSVNPIIYTIFN). At 391 to 408 (RDFRKAFKKVVCWSAQRT) the chain is on the cytoplasmic side.

This sequence belongs to the G-protein coupled receptor 1 family. Adrenergic receptor subfamily. ADRA2D sub-subfamily.

It localises to the cell membrane. In terms of biological role, alpha-2 adrenergic receptors mediate the catecholamine-induced inhibition of adenylate cyclase through the action of G proteins. The order of potency for this receptor is dexmedetomidine &gt; norepinephrine &gt; epinephrine &gt; oxymetazoline. This Danio rerio (Zebrafish) protein is Alpha-2Da adrenergic receptor (adra2da).